A 616-amino-acid chain; its full sequence is Pentatricopeptide repeat-containing protein At4g15720 (616 aa).

PPR repeat units follow at residues 63 to 93 (DTFT…MCEP), 94 to 128 (NVVS…RPVP), 130 to 164 (NEYT…GLRR), 165 to 199 (NIVV…GRNV), 200 to 228 (VSWT…FNAA), 235 to 269 (NQFM…GYES), 270 to 300 (NTVV…IRCH), 301 to 335 (SVIS…RINP), 336 to 371 (NYVT…GVVP), and 372 to 402 (DSRH…IEVG). The type E motif stretch occupies residues 409-484 (LWGALLSAGR…ERACSWIENK (76 aa)). Residues 485–515 (DSVYVFHAGDLSCDESGEIERFLKDLEKRMK) are type E(+) motif. Residues 522–616 (SSSMITTSSS…NGSCTCRDYW (95 aa)) form a type DYW motif region.

This sequence belongs to the PPR family. PCMP-H subfamily.

The chain is Pentatricopeptide repeat-containing protein At4g15720 (PCMP-H1) from Arabidopsis thaliana (Mouse-ear cress).